The primary structure comprises 390 residues: uncharacterized protein (390 aa).

11 helical membrane-spanning segments follow: residues 7-27 (IYIL…ISGI), 35-55 (LGIT…VYAL), 77-97 (LGLF…GWFI), 101-121 (IIMA…AAKI), 128-148 (GSAI…GVPL), 161-181 (VFGA…FTLP), 203-223 (VAMG…AYTY), 238-258 (LLSG…KFGG), 281-301 (LILL…LILW), 335-355 (MQFA…NVSL), and 357-377 (SITW…LLIF).

Belongs to the major facilitator superfamily.

The protein resides in the cell membrane. This is an uncharacterized protein from Bacillus subtilis (strain 168).